Here is a 231-residue protein sequence, read N- to C-terminus: 5'-methylthioadenosine/S-adenosylhomocysteine nucleosidase (231 aa).

Glutamate 12 (proton acceptor) is an active-site residue. Substrate is bound by residues glycine 78, methionine 153, and 174-175 (ME). Catalysis depends on aspartate 198, which acts as the Proton donor.

The protein belongs to the PNP/UDP phosphorylase family. MtnN subfamily.

It catalyses the reaction S-adenosyl-L-homocysteine + H2O = S-(5-deoxy-D-ribos-5-yl)-L-homocysteine + adenine. The catalysed reaction is S-methyl-5'-thioadenosine + H2O = 5-(methylsulfanyl)-D-ribose + adenine. The enzyme catalyses 5'-deoxyadenosine + H2O = 5-deoxy-D-ribose + adenine. The protein operates within amino-acid biosynthesis; L-methionine biosynthesis via salvage pathway; S-methyl-5-thio-alpha-D-ribose 1-phosphate from S-methyl-5'-thioadenosine (hydrolase route): step 1/2. Functionally, catalyzes the irreversible cleavage of the glycosidic bond in both 5'-methylthioadenosine (MTA) and S-adenosylhomocysteine (SAH/AdoHcy) to adenine and the corresponding thioribose, 5'-methylthioribose and S-ribosylhomocysteine, respectively. Also cleaves 5'-deoxyadenosine, a toxic by-product of radical S-adenosylmethionine (SAM) enzymes, into 5-deoxyribose and adenine. The chain is 5'-methylthioadenosine/S-adenosylhomocysteine nucleosidase from Bacillus pumilus (strain SAFR-032).